The following is a 358-amino-acid chain: 3'(2'),5'-bisphosphate nucleotidase (358 aa).

Catalysis depends on aspartate 52, which acts as the Proton acceptor. Residues glutamate 78, aspartate 140, isoleucine 142, and aspartate 143 each coordinate Mg(2+). Residue threonine 145 is the Proton acceptor of the active site. Positions 145, 239, 263, 266, 280, and 292 each coordinate adenosine 3',5'-bisphosphate. 5 residues coordinate AMP: histidine 239, serine 263, lysine 266, arginine 280, and aspartate 292. Aspartate 292 contacts Mg(2+).

This sequence belongs to the inositol monophosphatase superfamily. It depends on Mg(2+) as a cofactor. As to expression, is constitutively transcribed in both roots and shoots.

The catalysed reaction is 3'-phosphoadenylyl sulfate + H2O = adenosine 5'-phosphosulfate + phosphate. It catalyses the reaction adenosine 3',5'-bisphosphate + H2O = AMP + phosphate. It carries out the reaction adenosine 2',5'-bisphosphate + H2O = AMP + phosphate. With respect to regulation, inhibited by Ca(2+), Li(+), and Na(+) and activated by K(+). Its function is as follows. Phosphatase that converts adenosine 3'-phosphate 5'-phosphosulfate (PAPS) to adenosine 5'-phosphosulfate (APS) and 3'(2')-phosphoadenosine 5'-phosphate (PAP) to AMP. May regulate the flux of sulfur in the sulfur-activation pathway by converting PAPS to APS. Shows no activity on myo-inositol 1-phosphate, beta-glycerol phosphate, NADPH, NADP and 5'-AMP. This Oryza sativa (Rice) protein is 3'(2'),5'-bisphosphate nucleotidase.